The following is a 221-amino-acid chain: Eukaryotic translation initiation factor 3 subunit K (221 aa).

Positions 46 to 215 (YDLEANLACL…EKIEFDNLAP (170 aa)) constitute a PCI domain.

Belongs to the eIF-3 subunit K family. Component of the eukaryotic translation initiation factor 3 (eIF-3) complex.

Its subcellular location is the cytoplasm. Its function is as follows. Component of the eukaryotic translation initiation factor 3 (eIF-3) complex, which is involved in protein synthesis of a specialized repertoire of mRNAs and, together with other initiation factors, stimulates binding of mRNA and methionyl-tRNAi to the 40S ribosome. The eIF-3 complex specifically targets and initiates translation of a subset of mRNAs involved in cell proliferation. The protein is Eukaryotic translation initiation factor 3 subunit K of Anopheles gambiae (African malaria mosquito).